The sequence spans 302 residues: Nudix hydrolase 5 (302 aa).

The region spanning 122 to 254 (SHRIGIGAFV…EGNEMFKLIA (133 aa)) is the Nudix hydrolase domain. The Nudix box signature appears at 159-180 (GTIKEGESIWAGAVREVKEETD). Mg(2+)-binding residues include glutamate 174 and glutamate 178.

It belongs to the Nudix hydrolase family. Mg(2+) is required as a cofactor. Mn(2+) serves as cofactor. In terms of tissue distribution, expressed in roots, stems and leaves.

Functionally, probably mediates the hydrolysis of some nucleoside diphosphate derivatives. The protein is Nudix hydrolase 5 (NUDT5) of Arabidopsis thaliana (Mouse-ear cress).